A 108-amino-acid chain; its full sequence is UPF0060 membrane protein SA2130 (108 aa).

A run of 4 helical transmembrane segments spans residues 5–25 (IFIF…IWLW), 31–51 (SSLV…IATF), 60–80 (VYAA…MVVD), and 86–106 (KYDV…LLPS).

It belongs to the UPF0060 family.

The protein resides in the cell membrane. This chain is UPF0060 membrane protein SA2130, found in Staphylococcus aureus (strain N315).